The following is a 98-amino-acid chain: DNA-binding protein Fis (98 aa).

The H-T-H motif DNA-binding region spans 74 to 93 (QTRAAQMMGINRGTLRKKLK).

The protein belongs to the transcriptional regulatory Fis family. In terms of assembly, homodimer.

Functionally, activates ribosomal RNA transcription. Plays a direct role in upstream activation of rRNA promoters. In Proteus hauseri, this protein is DNA-binding protein Fis.